A 688-amino-acid polypeptide reads, in one-letter code: UvrABC system protein C (688 aa).

Residues 1 to 14 (MSPLDQKNKPRGGA) show a composition bias toward basic and acidic residues. A disordered region spans residues 1-20 (MSPLDQKNKPRGGADDLPPE). Positions 71 to 149 (NAPGVYRMMN…IKRLRPRFNV (79 aa)) constitute a GIY-YIG domain. The region spanning 259-294 (QKVKTEISAAMQQASEDLDFERAAIYRDRLAALSHV) is the UVR domain.

It belongs to the UvrC family. As to quaternary structure, interacts with UvrB in an incision complex.

It is found in the cytoplasm. The UvrABC repair system catalyzes the recognition and processing of DNA lesions. UvrC both incises the 5' and 3' sides of the lesion. The N-terminal half is responsible for the 3' incision and the C-terminal half is responsible for the 5' incision. This chain is UvrABC system protein C, found in Mesorhizobium japonicum (strain LMG 29417 / CECT 9101 / MAFF 303099) (Mesorhizobium loti (strain MAFF 303099)).